Reading from the N-terminus, the 328-residue chain is Dolichyl-diphosphooligosaccharide--protein glycosyltransferase subunit MAGT1 (328 aa).

The first 22 residues, 1 to 22, serve as a signal peptide directing secretion; the sequence is MLHKLLIVVFLVVCLHDMRLNG. Over 23–177 the chain is Extracellular; that stretch reads QKKKETLLSE…DVHIRVIRPP (155 aa). A Thioredoxin domain is found at 40–168; it reads WVSKRAVVRL…LARWVADRTD (129 aa). Asn-64 carries an N-linked (GlcNAc...) asparagine glycan. An intrachain disulfide couples Cys-80 to Cys-83. The helical transmembrane segment at 178-198 threads the bilayer; the sequence is NYAGPLMLGLLLAFIGSLAYL. At 199-202 the chain is on the cytoplasmic side; the sequence is RRNN. A helical transmembrane segment spans residues 203–223; sequence LEFLFNKNVWAFSALCFVLIM. At 224 to 257 the chain is on the extracellular side; that stretch reads TSGQMWNHIRGPPYAHKNPNTGQVSYIHGSSQAQ. The chain crosses the membrane as a helical span at residues 258–278; that stretch reads FVAETHIVLLFNAAVTIGMVL. Residues 279-293 lie on the Cytoplasmic side of the membrane; that stretch reads LHEAATSGLDIVKRK. A helical transmembrane segment spans residues 294 to 314; that stretch reads IMCVAGIGLVVLFFSWLLSVF. Residues 315–328 are Extracellular-facing; it reads RAKYHGYPYSFLFG.

This sequence belongs to the OST3/OST6 family. In terms of assembly, accessory component of the STT3B-containing form of the oligosaccharyltransferase (OST) complex.

The protein localises to the cell membrane. It is found in the endoplasmic reticulum. The protein resides in the endoplasmic reticulum membrane. It functions in the pathway protein modification; protein glycosylation. Functionally, accessory component of the STT3B-containing form of the N-oligosaccharyl transferase (OST) complex which catalyzes the transfer of a high mannose oligosaccharide from a lipid-linked oligosaccharide donor to an asparagine residue within an Asn-X-Ser/Thr consensus motif in nascent polypeptide chains. Involved in N-glycosylation of STT3B-dependent substrates. Specifically required for the glycosylation of a subset of acceptor sites that are near cysteine residues; in this function seems to act redundantly with TUSC3. In its oxidized form proposed to form transient mixed disulfides with a glycoprotein substrate to facilitate access of STT3B to the unmodified acceptor site. Also has oxidoreductase-independent functions in the STT3B-containing OST complex possibly involving substrate recognition. Could indirectly play a role in Mg(2+) transport. The polypeptide is Dolichyl-diphosphooligosaccharide--protein glycosyltransferase subunit MAGT1 (Danio rerio (Zebrafish)).